Reading from the N-terminus, the 336-residue chain is Ethanol acetyltransferase 1 (336 aa).

The transit peptide at 1-14 directs the protein to the mitochondrion; that stretch reads MFPTRVLRSTLQKL. Residues 44–296 form the AB hydrolase-1 domain; sequence PIVFLHGIFG…VNSSHDILDQ (253 aa). Active-site charge relay system residues include Ser-117, Asp-141, and His-291.

This sequence belongs to the AB hydrolase superfamily.

It localises to the mitochondrion. It carries out the reaction ethanol + acetyl-CoA = ethyl acetate + CoA. It catalyses the reaction acetyl-CoA + H2O = acetate + CoA + H(+). The enzyme catalyses ethyl acetate + H2O = ethanol + acetate + H(+). Functionally, alcohol acetyltransferase that catalyzes the synthesis of ethyl acetate from ethanol and acetyl-CoA. Can also function as a thioesterase by hydrolyzing acetyl-CoA in the absence of ethanol, as well as esterase hydrolyzing ethyl acetate. The polypeptide is Ethanol acetyltransferase 1 (EAT1) (Cyberlindnera jadinii (strain ATCC 18201 / CBS 1600 / BCRC 20928 / JCM 3617 / NBRC 0987 / NRRL Y-1542) (Torula yeast)).